The primary structure comprises 99 residues: Large ribosomal subunit protein uL23 (99 aa).

The protein belongs to the universal ribosomal protein uL23 family. As to quaternary structure, part of the 50S ribosomal subunit. Contacts protein L29, and trigger factor when it is bound to the ribosome.

In terms of biological role, one of the early assembly proteins it binds 23S rRNA. One of the proteins that surrounds the polypeptide exit tunnel on the outside of the ribosome. Forms the main docking site for trigger factor binding to the ribosome. This is Large ribosomal subunit protein uL23 from Shewanella sediminis (strain HAW-EB3).